We begin with the raw amino-acid sequence, 282 residues long: Bis(5'-nucleosyl)-tetraphosphatase, symmetrical (282 aa).

Belongs to the Ap4A hydrolase family.

It catalyses the reaction P(1),P(4)-bis(5'-adenosyl) tetraphosphate + H2O = 2 ADP + 2 H(+). In terms of biological role, hydrolyzes diadenosine 5',5'''-P1,P4-tetraphosphate to yield ADP. This chain is Bis(5'-nucleosyl)-tetraphosphatase, symmetrical, found in Burkholderia thailandensis (strain ATCC 700388 / DSM 13276 / CCUG 48851 / CIP 106301 / E264).